The sequence spans 352 residues: MERNVVIRLENVTKSFDDQVVLKNLTLDVRKNEFLTLLGPSGCGKTTTLRLIGGFEKPDEGIILHHGNDISNLPPYKRNVNTVFQKYALFPHLNVYENIAFGLKIKKMNKSLIKEKVEKALRQVNLVGYENRRIDQLSGGQQQRVAIARAIVNEPEILLLDEPLGALDLKLRQEMQYELKTLQKELGITFVYVTHDQEEALTMSDTVVVMNNGVIQQKGTPEDIYNEPVNAFVADFIGESNIVEGIMRQDGVVEIFGRVYECVDKGFAVNEKVDVVIRPEDIKLLEPSENKINGQVTSCIFKGVHYETCVMTDGFEWVIHNTKSFTPGENVSINVDPFDIHIMKKMEKEAGT.

The 231-residue stretch at 7–237 (IRLENVTKSF…PVNAFVADFI (231 aa)) folds into the ABC transporter domain. ATP is bound at residue 39–46 (GPSGCGKT).

The protein belongs to the ABC transporter superfamily. Spermidine/putrescine importer (TC 3.A.1.11.1) family. The complex is composed of two ATP-binding proteins (PotA), two transmembrane proteins (PotB and PotC) and a solute-binding protein (PotD).

It is found in the cell membrane. The catalysed reaction is ATP + H2O + polyamine-[polyamine-binding protein]Side 1 = ADP + phosphate + polyamineSide 2 + [polyamine-binding protein]Side 1.. Its function is as follows. Part of the ABC transporter complex PotABCD involved in spermidine/putrescine import. Responsible for energy coupling to the transport system. The sequence is that of Spermidine/putrescine import ATP-binding protein PotA from Acetivibrio thermocellus (strain ATCC 27405 / DSM 1237 / JCM 9322 / NBRC 103400 / NCIMB 10682 / NRRL B-4536 / VPI 7372) (Clostridium thermocellum).